Here is a 154-residue protein sequence, read N- to C-terminus: Proline dehydrogenase transcriptional activator (154 aa).

One can recognise an HTH asnC-type domain in the interval 5–66; the sequence is IDATDRRILH…MLSPIRLGLI (62 aa). The segment at residues 24–43 is a DNA-binding region (H-T-H motif); it reads VTELARKVGLSKTPVAARIR.

Transcriptional activator of the putA gene in response to proline. In Rhodobacter capsulatus (Rhodopseudomonas capsulata), this protein is Proline dehydrogenase transcriptional activator (putR).